A 56-amino-acid polypeptide reads, in one-letter code: Serine protease inhibitor Kazal-type 1 (56 aa).

One can recognise a Kazal-like domain in the interval 3–56; that stretch reads LGREAKCNNNAGGCTKIYNPVCGTDGNTYPNECMLCVENQKRQMPVLIQRSGPC. Disulfide bonds link Cys-9–Cys-38, Cys-16–Cys-35, and Cys-24–Cys-56.

The protein resides in the secreted. Functionally, serine protease inhibitor which exhibits anti-trypsin activity. In the pancreas, protects against trypsin-catalyzed premature activation of zymogens. In the male reproductive tract, binds to sperm heads where it modulates sperm capacitance by inhibiting calcium uptake and nitrogen oxide (NO) production. The protein is Serine protease inhibitor Kazal-type 1 (SPINK1) of Equus caballus (Horse).